Consider the following 221-residue polypeptide: MDDELTLLPREKMLSFGITSLTDAELLALFLRTGTSGKSVFVLAQELLQHFGSLHGLLNANLDEFRYVEGIGLAKYAQLKGIAELARRYHSVRVLGDNPLLSPEMTKDFLQSQLSDAEREVFMVIFLDNQHRVVKHSRMFSGTLRHVEVHPREIVREAIKVNAAAVILAHNHPSGCAEPSKADKDITERIIKCCQFMDIHVLDHFIIGRGEYVSFAEQGWI.

Residues 99-221 enclose the MPN domain; sequence PLLSPEMTKD…YVSFAEQGWI (123 aa). Zn(2+) contacts are provided by His170, His172, and Asp183. A JAMM motif motif is present at residues 170–183; sequence HNHPSGCAEPSKAD.

This sequence belongs to the UPF0758 family. YicR subfamily.

The chain is UPF0758 protein Ent638_0101 from Enterobacter sp. (strain 638).